The sequence spans 159 residues: Dihydrofolate reductase (159 aa).

The region spanning 2 to 157 (TLSILVAHDL…IPHTFLHLIR (156 aa)) is the DHFR domain. Residue 6-8 (LVA) participates in substrate binding. NADP(+) contacts are provided by residues 7–8 (VA) and 15–20 (IGFENQ). Position 28 (aspartate 28) interacts with substrate. 44–47 (GRKT) is an NADP(+) binding site. Arginine 58 is a substrate binding site. NADP(+)-binding positions include 63-66 (LTSD) and 93-98 (FGGQIL). Residue threonine 112 participates in substrate binding.

It belongs to the dihydrofolate reductase family.

It carries out the reaction (6S)-5,6,7,8-tetrahydrofolate + NADP(+) = 7,8-dihydrofolate + NADPH + H(+). Its pathway is cofactor biosynthesis; tetrahydrofolate biosynthesis; 5,6,7,8-tetrahydrofolate from 7,8-dihydrofolate: step 1/1. Key enzyme in folate metabolism. Catalyzes an essential reaction for de novo glycine and purine synthesis, and for DNA precursor synthesis. The sequence is that of Dihydrofolate reductase (folA) from Staphylococcus aureus (strain MW2).